The sequence spans 475 residues: Ubiquitin carboxyl-terminal hydrolase calypso (475 aa).

The region spanning 44–275 (GWLELESDPG…IRFNLMAVVP (232 aa)) is the UCH catalytic domain. Residue cysteine 130 is the Nucleophile of the active site. The active-site Proton donor is histidine 212. Residues 333-360 (AKDLQLLLKNLDTEIAINEQNLADENDR) are a coiled coil. One can recognise a ULD domain in the interval 374 to 402 (NYDKFICTFLSMLAHQGVLGELVSQHLLP). A positively charged C-terminal tail required for binding nucleosomes region spans residues 404–475 (KKVSGQSAAN…KGRNKCRKRK (72 aa)). A disordered region spans residues 411–475 (AANRISKQNS…KGRNKCRKRK (65 aa)). Residues 419–460 (NSAASSAGANAGAAAGVTPKSQQQQQQPQTAASKNGKSPGKT) are compositionally biased toward low complexity. Positions 461–475 (PGRRRKGRNKCRKRK) are enriched in basic residues.

Belongs to the peptidase C12 family. BAP1 subfamily. As to quaternary structure, catalytic component of the polycomb repressive deubiquitinase (PR-DUB) complex, at least composed of caly/calypso, Asx and sba (MBD5/6 homolog). The PR-DUB complex associates with nucleosomes to mediate deubiquitination of histone H2AK118ub1 substrates; the association requires the positively charged C-terminal tail of caly, probably due to direct binding of DNA. Interacts (via ULD domain) with Asx (via DEUBAD domain); the interaction produces a stable heterodimer with a composite binding site for ubiquitin. Homodimerizes (via coiled-coil hinge-region between the UCH and ULD domains) to mediate assembly of 2 copies of the caly-Asx heterodimer into a bisymmetric tetramer; dimerization enhances PR-DUB association with nucleosomes.

The protein resides in the nucleus. It catalyses the reaction Thiol-dependent hydrolysis of ester, thioester, amide, peptide and isopeptide bonds formed by the C-terminal Gly of ubiquitin (a 76-residue protein attached to proteins as an intracellular targeting signal).. Functionally, catalytic component of the polycomb repressive deubiquitinase (PR-DUB) complex, a complex that specifically mediates deubiquitination of histone H2A monoubiquitinated at 'Lys-119' (H2AK118ub1). Mediates bisymmetric organization of the PR-DUB complex and is involved in association with nucleosomes to mediate deubiquitination. Does not deubiquitinate monoubiquitinated histone H2B. Required to maintain the transcriptionally repressive state of homeotic genes throughout development. The PR-DUB complex has weak or no activity toward 'Lys-48'- and 'Lys-63'-linked polyubiquitin chains. Polycomb group (PcG) protein. This chain is Ubiquitin carboxyl-terminal hydrolase calypso, found in Drosophila persimilis (Fruit fly).